The sequence spans 73 residues: UPF0270 protein PMI2817 (73 aa).

Belongs to the UPF0270 family.

This is UPF0270 protein PMI2817 from Proteus mirabilis (strain HI4320).